The following is a 1375-amino-acid chain: uncharacterized protein (1375 aa).

The Helicase ATP-binding domain maps to 277 to 476 (LLASGDIRGG…FGLLFLLRYS (200 aa)). 290-297 (DEMGMGKT) is a binding site for ATP. The RING-type zinc finger occupies 1092–1130 (CIICRDIIKQGFITTCGHLYCSFCLEAWLKHSSSCPMCK). The Helicase C-terminal domain occupies 1190 to 1336 (TISKHLLYLK…QLDKLGLDVP (147 aa)).

Belongs to the SNF2/RAD54 helicase family.

It is found in the nucleus. This is an uncharacterized protein from Schizosaccharomyces pombe (strain 972 / ATCC 24843) (Fission yeast).